The following is a 265-amino-acid chain: Sulfur carrier protein FdhD (265 aa).

Catalysis depends on Cys-107, which acts as the Cysteine persulfide intermediate.

This sequence belongs to the FdhD family.

The protein resides in the cytoplasm. In terms of biological role, required for formate dehydrogenase (FDH) activity. Acts as a sulfur carrier protein that transfers sulfur from IscS to the molybdenum cofactor prior to its insertion into FDH. The protein is Sulfur carrier protein FdhD of Staphylococcus aureus (strain bovine RF122 / ET3-1).